Reading from the N-terminus, the 361-residue chain is Chorismate synthase (361 aa).

NADP(+) contacts are provided by Arg48 and Arg54. Residues 125–127 (RSS), 238–239 (NA), Gly278, 293–297 (KPTSS), and Arg319 each bind FMN.

The protein belongs to the chorismate synthase family. Homotetramer. Requires FMNH2 as cofactor.

It catalyses the reaction 5-O-(1-carboxyvinyl)-3-phosphoshikimate = chorismate + phosphate. Its pathway is metabolic intermediate biosynthesis; chorismate biosynthesis; chorismate from D-erythrose 4-phosphate and phosphoenolpyruvate: step 7/7. Functionally, catalyzes the anti-1,4-elimination of the C-3 phosphate and the C-6 proR hydrogen from 5-enolpyruvylshikimate-3-phosphate (EPSP) to yield chorismate, which is the branch point compound that serves as the starting substrate for the three terminal pathways of aromatic amino acid biosynthesis. This reaction introduces a second double bond into the aromatic ring system. In Salmonella paratyphi A (strain ATCC 9150 / SARB42), this protein is Chorismate synthase.